Here is a 319-residue protein sequence, read N- to C-terminus: Red chlorophyll catabolite reductase, chloroplastic (319 aa).

Residues M1 to Q39 constitute a chloroplast transit peptide. Red chlorophyll catabolite-binding positions include E154 and Y207–S209. The stretch at L255–K286 forms a coiled coil. D291 is a red chlorophyll catabolite binding site.

In terms of assembly, homodimer. Interacts with HCAR. Interacts with SGR1, NYC1, NOL, PPH, PAO and the LHCII complex. Part of a SGR1-CCE-LHCII complex, which acts in chlorophyll breakdown. As to expression, expressed in all tissues tested, including roots.

It is found in the plastid. Its subcellular location is the chloroplast stroma. It localises to the chloroplast thylakoid membrane. The catalysed reaction is primary fluorescent chlorophyll catabolite + 2 oxidized [2Fe-2S]-[ferredoxin] = red chlorophyll catabolite + 2 reduced [2Fe-2S]-[ferredoxin] + 3 H(+). Its pathway is porphyrin-containing compound metabolism; chlorophyll degradation. Catalyzes the key reaction of chlorophyll catabolism, porphyrin macrocycle cleavage of pheophorbide a (pheide a) to a primary fluorescent catabolite (pFCC). Works in a two-step reaction with pheophorbide a oxygenase (PaO) by reducing the C20/C1 double bond of the intermediate, RCC. Belongs to the chlorophyll catabolic enzymes (CCEs). The protein is Red chlorophyll catabolite reductase, chloroplastic of Arabidopsis thaliana (Mouse-ear cress).